A 258-amino-acid polypeptide reads, in one-letter code: Thiazole synthase (258 aa).

Residue lysine 98 is the Schiff-base intermediate with DXP of the active site. 1-deoxy-D-xylulose 5-phosphate-binding positions include glycine 159, 185 to 186 (AG), and 207 to 208 (NT).

Belongs to the ThiG family. Homotetramer. Forms heterodimers with either ThiH or ThiS.

The protein localises to the cytoplasm. The catalysed reaction is [ThiS sulfur-carrier protein]-C-terminal-Gly-aminoethanethioate + 2-iminoacetate + 1-deoxy-D-xylulose 5-phosphate = [ThiS sulfur-carrier protein]-C-terminal Gly-Gly + 2-[(2R,5Z)-2-carboxy-4-methylthiazol-5(2H)-ylidene]ethyl phosphate + 2 H2O + H(+). Its pathway is cofactor biosynthesis; thiamine diphosphate biosynthesis. Catalyzes the rearrangement of 1-deoxy-D-xylulose 5-phosphate (DXP) to produce the thiazole phosphate moiety of thiamine. Sulfur is provided by the thiocarboxylate moiety of the carrier protein ThiS. In vitro, sulfur can be provided by H(2)S. In Bacillus cereus (strain ATCC 14579 / DSM 31 / CCUG 7414 / JCM 2152 / NBRC 15305 / NCIMB 9373 / NCTC 2599 / NRRL B-3711), this protein is Thiazole synthase.